The chain runs to 138 residues: Putative pre-16S rRNA nuclease (138 aa).

This sequence belongs to the YqgF nuclease family.

The protein localises to the cytoplasm. Functionally, could be a nuclease involved in processing of the 5'-end of pre-16S rRNA. The polypeptide is Putative pre-16S rRNA nuclease (Karelsulcia muelleri (strain GWSS) (Sulcia muelleri)).